Consider the following 173-residue polypeptide: MQAPPTREGPRINDMIDEPTVLLIDAEGEKRGVIPTDEAIRMAEEAGLDLVEVSPNAKPPVCKLLDYGKFKYQAQKKANEARKKQKTVEVKEIKMRPNIDTHDYEVKMRAMLRFFEEGDKVKVTLRFRGREMAHQELGMVLLNKVKEEVEPIAKVELYPRLEGRQMIMVLAPK.

The protein belongs to the IF-3 family. In terms of assembly, monomer.

It is found in the cytoplasm. IF-3 binds to the 30S ribosomal subunit and shifts the equilibrium between 70S ribosomes and their 50S and 30S subunits in favor of the free subunits, thus enhancing the availability of 30S subunits on which protein synthesis initiation begins. The polypeptide is Translation initiation factor IF-3 (Parvibaculum lavamentivorans (strain DS-1 / DSM 13023 / NCIMB 13966)).